We begin with the raw amino-acid sequence, 574 residues long: MEGQAAETNHRAETVVRAELCLSAEQGPETTAYSQKRCLFLPMEVWQEAQQLLALAAPAFLSQLMIFLISIVSSIFCGHLGKVELDAVSLAITIINITGVAVGTGLAGACDTLISQTFGGSNLKLVGIILQRGILILLLFCFPCWALLINTESILLLFRQDPEVSKLTQIYVLIFLPALPAAFLYQLLAKYLQNQGIIYPQVLTGFIANIFNALFNYILLYVLGLGVMGSACANTVSQFIQMILLFLYIVWRRLYADTWGGWSQACFEEWGAFIRLAVASMLMLCIEWWAFEISMFLAGVLGMVDLAAQAIIYQVAIVVYLIPLGLCIAGSIRVGHGLGAGNTEQAKRSALVVLCMTELCALLSGILLATLKDVVAYIFTSDPNIVALVSYVLPVYSACLLFDACVAACGGILRGSGKLKVGAISHTVGYYVIGLPLGISLMFAAKLGIIGFWFGILACGIAQSIFLIIFVFKIDWKRASEEAQTRASERVEIPQKIDNKPSVYQEGCPTEQGDVDPGNVESIEFSQSSTSSEGTSPTPAGAAQHTRTLILTRGLALGCAVGTLIIGIVIRLSV.

The Cytoplasmic portion of the chain corresponds to 1–51; that stretch reads MEGQAAETNHRAETVVRAELCLSAEQGPETTAYSQKRCLFLPMEVWQEAQQ. Residues 52 to 72 form a helical membrane-spanning segment; that stretch reads LLALAAPAFLSQLMIFLISIV. At 73-86 the chain is on the extracellular side; it reads SSIFCGHLGKVELD. Residues 87 to 107 form a helical membrane-spanning segment; it reads AVSLAITIINITGVAVGTGLA. Over 108 to 133 the chain is Cytoplasmic; that stretch reads GACDTLISQTFGGSNLKLVGIILQRG. Residues 134-154 traverse the membrane as a helical segment; that stretch reads ILILLLFCFPCWALLINTESI. At 155-168 the chain is on the extracellular side; it reads LLLFRQDPEVSKLT. Residues 169-189 form a helical membrane-spanning segment; sequence QIYVLIFLPALPAAFLYQLLA. Residues 190–204 are Cytoplasmic-facing; that stretch reads KYLQNQGIIYPQVLT. Residues 205 to 225 form a helical membrane-spanning segment; sequence GFIANIFNALFNYILLYVLGL. The Extracellular segment spans residues 226–230; the sequence is GVMGS. A helical transmembrane segment spans residues 231 to 251; that stretch reads ACANTVSQFIQMILLFLYIVW. Residues 252-271 are Cytoplasmic-facing; it reads RRLYADTWGGWSQACFEEWG. Residues 272–291 form a helical membrane-spanning segment; the sequence is AFIRLAVASMLMLCIEWWAF. Topologically, residues 292–309 are extracellular; that stretch reads EISMFLAGVLGMVDLAAQ. Residues 310 to 330 traverse the membrane as a helical segment; the sequence is AIIYQVAIVVYLIPLGLCIAG. Topologically, residues 331–350 are cytoplasmic; it reads SIRVGHGLGAGNTEQAKRSA. A helical membrane pass occupies residues 351 to 371; it reads LVVLCMTELCALLSGILLATL. Topologically, residues 372-384 are extracellular; sequence KDVVAYIFTSDPN. The helical transmembrane segment at 385-405 threads the bilayer; sequence IVALVSYVLPVYSACLLFDAC. The Cytoplasmic portion of the chain corresponds to 406–430; sequence VAACGGILRGSGKLKVGAISHTVGY. A helical membrane pass occupies residues 431-451; the sequence is YVIGLPLGISLMFAAKLGIIG. The Extracellular segment spans residues 452 to 453; that stretch reads FW. A helical membrane pass occupies residues 454–472; that stretch reads FGILACGIAQSIFLIIFVF. The Cytoplasmic segment spans residues 473–549; the sequence is KIDWKRASEE…AGAAQHTRTL (77 aa). The disordered stretch occupies residues 500–541; sequence KPSVYQEGCPTEQGDVDPGNVESIEFSQSSTSSEGTSPTPAG. Over residues 521–538 the composition is skewed to low complexity; that stretch reads ESIEFSQSSTSSEGTSPT. Residues 550 to 570 traverse the membrane as a helical segment; sequence ILTRGLALGCAVGTLIIGIVI. Topologically, residues 571–574 are extracellular; sequence RLSV.

The protein belongs to the multi antimicrobial extrusion (MATE) (TC 2.A.66.1) family.

It is found in the cell membrane. Its subcellular location is the apical cell membrane. It carries out the reaction thiamine(out) + H(+)(in) = thiamine(in) + H(+)(out). The catalysed reaction is estrone 3-sulfate(in) + H(+)(out) = estrone 3-sulfate(out) + H(+)(in). It catalyses the reaction creatinine(in) + H(+)(out) = creatinine(out) + H(+)(in). The enzyme catalyses agmatine(in) + H(+)(out) = agmatine(out) + H(+)(in). Functionally, multidrug efflux pump that functions as a H(+)/organic cation antiporter. Mediates the secretion of cationic compounds including drugs, toxins and endogenous metabolites. Plays a role physiological role in the excretion of drugs, toxins and endogenous metabolites through the kidney and liver, into urine and bile respectively. This is Multidrug and toxin extrusion protein 1 (slc47a1) from Xenopus tropicalis (Western clawed frog).